We begin with the raw amino-acid sequence, 628 residues long: Dihydroxy-acid dehydratase (628 aa).

Asp-80 contacts Mg(2+). Position 121 (Cys-121) interacts with [2Fe-2S] cluster. Residues Asp-122 and Lys-123 each coordinate Mg(2+). Lys-123 carries the post-translational modification N6-carboxylysine. Cys-207 is a [2Fe-2S] cluster binding site. A Mg(2+)-binding site is contributed by Glu-503. Residue Ser-529 is the Proton acceptor of the active site.

Belongs to the IlvD/Edd family. As to quaternary structure, homodimer. It depends on [2Fe-2S] cluster as a cofactor. The cofactor is Mg(2+).

The enzyme catalyses (2R)-2,3-dihydroxy-3-methylbutanoate = 3-methyl-2-oxobutanoate + H2O. It catalyses the reaction (2R,3R)-2,3-dihydroxy-3-methylpentanoate = (S)-3-methyl-2-oxopentanoate + H2O. Its pathway is amino-acid biosynthesis; L-isoleucine biosynthesis; L-isoleucine from 2-oxobutanoate: step 3/4. It participates in amino-acid biosynthesis; L-valine biosynthesis; L-valine from pyruvate: step 3/4. Its function is as follows. Functions in the biosynthesis of branched-chain amino acids. Catalyzes the dehydration of (2R,3R)-2,3-dihydroxy-3-methylpentanoate (2,3-dihydroxy-3-methylvalerate) into 2-oxo-3-methylpentanoate (2-oxo-3-methylvalerate) and of (2R)-2,3-dihydroxy-3-methylbutanoate (2,3-dihydroxyisovalerate) into 2-oxo-3-methylbutanoate (2-oxoisovalerate), the penultimate precursor to L-isoleucine and L-valine, respectively. This is Dihydroxy-acid dehydratase from Psychrobacter arcticus (strain DSM 17307 / VKM B-2377 / 273-4).